A 173-amino-acid chain; its full sequence is Crossover junction endodeoxyribonuclease RuvC (173 aa).

Residues aspartate 8, glutamate 67, and aspartate 139 contribute to the active site. Residues aspartate 8, glutamate 67, and aspartate 139 each coordinate Mg(2+).

Belongs to the RuvC family. As to quaternary structure, homodimer which binds Holliday junction (HJ) DNA. The HJ becomes 2-fold symmetrical on binding to RuvC with unstacked arms; it has a different conformation from HJ DNA in complex with RuvA. In the full resolvosome a probable DNA-RuvA(4)-RuvB(12)-RuvC(2) complex forms which resolves the HJ. Requires Mg(2+) as cofactor.

It localises to the cytoplasm. The enzyme catalyses Endonucleolytic cleavage at a junction such as a reciprocal single-stranded crossover between two homologous DNA duplexes (Holliday junction).. In terms of biological role, the RuvA-RuvB-RuvC complex processes Holliday junction (HJ) DNA during genetic recombination and DNA repair. Endonuclease that resolves HJ intermediates. Cleaves cruciform DNA by making single-stranded nicks across the HJ at symmetrical positions within the homologous arms, yielding a 5'-phosphate and a 3'-hydroxyl group; requires a central core of homology in the junction. The consensus cleavage sequence is 5'-(A/T)TT(C/G)-3'. Cleavage occurs on the 3'-side of the TT dinucleotide at the point of strand exchange. HJ branch migration catalyzed by RuvA-RuvB allows RuvC to scan DNA until it finds its consensus sequence, where it cleaves and resolves the cruciform DNA. This chain is Crossover junction endodeoxyribonuclease RuvC, found in Vibrio parahaemolyticus serotype O3:K6 (strain RIMD 2210633).